Here is a 30-residue protein sequence, read N- to C-terminus: SVTPIVCGETCFGGTCNTPGCSCSWPICTK.

The cyclopeptide (Ser-Lys) cross-link spans 1–30; the sequence is SVTPIVCGETCFGGTCNTPGCSCSWPICTK. Intrachain disulfides connect Cys-7/Cys-21, Cys-11/Cys-23, and Cys-16/Cys-28.

In terms of processing, this is a cyclic peptide.

Functionally, probably participates in a plant defense mechanism. This chain is Cyclotide psyleio E, found in Psychotria leiocarpa.